A 607-amino-acid polypeptide reads, in one-letter code: UvrABC system protein C (607 aa).

One can recognise a GIY-YIG domain in the interval 16 to 94; it reads GRPGVYRMFD…IKEWRPPYNI (79 aa). Positions 203–238 constitute a UVR domain; the sequence is NALSDELNASMEKAAMALDFERAAELRDQVALLRRV.

It belongs to the UvrC family. In terms of assembly, interacts with UvrB in an incision complex.

It localises to the cytoplasm. The UvrABC repair system catalyzes the recognition and processing of DNA lesions. UvrC both incises the 5' and 3' sides of the lesion. The N-terminal half is responsible for the 3' incision and the C-terminal half is responsible for the 5' incision. The protein is UvrABC system protein C of Pseudomonas syringae pv. syringae (strain B728a).